The chain runs to 278 residues: 4-deoxy-L-threo-5-hexosulose-uronate ketol-isomerase (278 aa).

Positions 196, 198, 203, and 245 each coordinate Zn(2+).

The protein belongs to the KduI family. Requires Zn(2+) as cofactor.

The enzyme catalyses 5-dehydro-4-deoxy-D-glucuronate = 3-deoxy-D-glycero-2,5-hexodiulosonate. It functions in the pathway glycan metabolism; pectin degradation; 2-dehydro-3-deoxy-D-gluconate from pectin: step 4/5. Its function is as follows. Catalyzes the isomerization of 5-dehydro-4-deoxy-D-glucuronate to 3-deoxy-D-glycero-2,5-hexodiulosonate. This Paraburkholderia phytofirmans (strain DSM 17436 / LMG 22146 / PsJN) (Burkholderia phytofirmans) protein is 4-deoxy-L-threo-5-hexosulose-uronate ketol-isomerase.